Reading from the N-terminus, the 674-residue chain is Methionine--tRNA ligase (674 aa).

A 'HIGH' region motif is present at residues 12 to 22 (PYANGPIHLGH). Residues C143, C146, C156, and C159 each coordinate Zn(2+). The 'KMSKS' region signature appears at 328-332 (KMSKS). K331 lines the ATP pocket. Positions 573-674 (SFAKLDLRIA…EGARPGMRVK (102 aa)) constitute a tRNA-binding domain.

This sequence belongs to the class-I aminoacyl-tRNA synthetase family. MetG type 1 subfamily. As to quaternary structure, homodimer. It depends on Zn(2+) as a cofactor.

Its subcellular location is the cytoplasm. The catalysed reaction is tRNA(Met) + L-methionine + ATP = L-methionyl-tRNA(Met) + AMP + diphosphate. In terms of biological role, is required not only for elongation of protein synthesis but also for the initiation of all mRNA translation through initiator tRNA(fMet) aminoacylation. This Nitrosococcus oceani (strain ATCC 19707 / BCRC 17464 / JCM 30415 / NCIMB 11848 / C-107) protein is Methionine--tRNA ligase.